Reading from the N-terminus, the 281-residue chain is 2,3,4,5-tetrahydropyridine-2,6-dicarboxylate N-succinyltransferase (281 aa).

2 residues coordinate substrate: Arg108 and Asp145.

This sequence belongs to the transferase hexapeptide repeat family. In terms of assembly, homotrimer.

The protein resides in the cytoplasm. It carries out the reaction (S)-2,3,4,5-tetrahydrodipicolinate + succinyl-CoA + H2O = (S)-2-succinylamino-6-oxoheptanedioate + CoA. Its pathway is amino-acid biosynthesis; L-lysine biosynthesis via DAP pathway; LL-2,6-diaminopimelate from (S)-tetrahydrodipicolinate (succinylase route): step 1/3. The protein is 2,3,4,5-tetrahydropyridine-2,6-dicarboxylate N-succinyltransferase of Bradyrhizobium diazoefficiens (strain JCM 10833 / BCRC 13528 / IAM 13628 / NBRC 14792 / USDA 110).